A 148-amino-acid polypeptide reads, in one-letter code: CASP-like protein 1 (148 aa).

The next 3 membrane-spanning stretches (helical) occupy residues 31–51, 74–94, and 121–141; these read FIYF…TSLL, VLLL…GYIG, and IAAG…SFFT.

It belongs to the Casparian strip membrane proteins (CASP) family. As to quaternary structure, homodimer and heterodimers.

It is found in the cell membrane. This chain is CASP-like protein 1, found in Panax ginseng (Korean ginseng).